The primary structure comprises 1026 residues: RecBCD enzyme subunit RecB (1026 aa).

In terms of domain architecture, UvrD-like helicase ATP-binding spans 1–438 (MSSFDIFSPT…LILDTNYRST (438 aa)). The segment at 1-766 (MSSFDIFSPT…LANYANITQH (766 aa)) is DNA-binding and helicase activity, interacts with RecC. ATP is bound at residue 21-28 (ASAGTGKT). A UvrD-like helicase C-terminal domain is found at 452–700 (PSPFLETPQT…KITTVHSSKG (249 aa)). The interval 815–1026 (SQPIYSFSST…KGNGFLQPSP (212 aa)) is nuclease activity, interacts with RecD and RecA. Mg(2+) contacts are provided by histidine 854, aspartate 940, and aspartate 953. Catalysis depends on aspartate 953, which acts as the For nuclease activity.

This sequence belongs to the helicase family. UvrD subfamily. Heterotrimer of RecB, RecC and RecD. All subunits contribute to DNA-binding. Interacts with RecA. Mg(2+) is required as a cofactor.

It catalyses the reaction Exonucleolytic cleavage (in the presence of ATP) in either 5'- to 3'- or 3'- to 5'-direction to yield 5'-phosphooligonucleotides.. The catalysed reaction is Couples ATP hydrolysis with the unwinding of duplex DNA by translocating in the 3'-5' direction.. The enzyme catalyses ATP + H2O = ADP + phosphate + H(+). Its function is as follows. A helicase/nuclease that prepares dsDNA breaks (DSB) for recombinational DNA repair. Binds to DSBs and unwinds DNA via a highly rapid and processive ATP-dependent bidirectional helicase activity. Unwinds dsDNA until it encounters a Chi (crossover hotspot instigator) sequence from the 3' direction. Cuts ssDNA a few nucleotides 3' to the Chi site. The properties and activities of the enzyme are changed at Chi. The Chi-altered holoenzyme produces a long 3'-ssDNA overhang and facilitates RecA-binding to the ssDNA for homologous DNA recombination and repair. Holoenzyme degrades any linearized DNA that is unable to undergo homologous recombination. In the holoenzyme this subunit contributes ATPase, 3'-5' helicase, exonuclease activity and loads RecA onto ssDNA. The polypeptide is RecBCD enzyme subunit RecB (Chlamydia muridarum (strain MoPn / Nigg)).